An 83-amino-acid polypeptide reads, in one-letter code: MTKPQINLQDAFLNQVRKENIPVTIFLVNGFQLKGMVRGFDNFTVILESEGKQLMVYKHAISTVSPLKPVSTSFSEAKAPEKS.

One can recognise a Sm domain in the interval 10–70 (DAFLNQVRKE…ISTVSPLKPV (61 aa)).

The protein belongs to the Hfq family. Homohexamer.

RNA chaperone that binds small regulatory RNA (sRNAs) and mRNAs to facilitate mRNA translational regulation in response to envelope stress, environmental stress and changes in metabolite concentrations. Also binds with high specificity to tRNAs. This Pelotomaculum thermopropionicum (strain DSM 13744 / JCM 10971 / SI) protein is RNA-binding protein Hfq.